The sequence spans 1585 residues: Sterol 3-beta-glucosyltransferase (1585 aa).

The span at 1 to 18 (MSPPISPTPPPLQPPFPP) shows a compositional bias: pro residues. Disordered regions lie at residues 1 to 154 (MSPP…CDFR), 177 to 225 (PWEE…PTHT), and 249 to 279 (YQYA…LPKG). Composition is skewed to polar residues over residues 65 to 77 (DQAT…SLIP), 105 to 123 (DAQT…STHE), and 132 to 148 (PRTS…QMAE). Over residues 178–194 (WEEDDDSDDGEDDDEFI) the composition is skewed to acidic residues. The span at 255–273 (ETSSRRTSAAGSESSSEGE) shows a compositional bias: low complexity. The 169-residue stretch at 387-555 (ERLMEVFGLE…EAIVDVEKSP (169 aa)) folds into the GRAM 1 domain. A PH domain is found at 438–530 (LLVKSGPLHK…WVKAIQKVMF (93 aa)). Disordered stretches follow at residues 625–645 (TSHA…LGMA) and 666–852 (DGEP…GSES). Residues 670 to 689 (LEEHSQGPHHNDEDASHLPH) show a composition bias toward basic and acidic residues. Composition is skewed to polar residues over residues 760–785 (TDSS…QASV), 806–817 (NKPSVVDSNSAE), and 827–840 (SWTS…QMVK). Residues 862 to 933 (RKFRTFFALS…RDLYGLKAQK (72 aa)) form the GRAM 2 domain. The UDP-alpha-D-glucose site is built by serine 1043, arginine 1044, aspartate 1046, isoleucine 1358, histidine 1360, histidine 1373, glycine 1377, threonine 1378, aspartate 1397, and glutamine 1398. The tract at residues 1499–1555 (NRVRSRSRSRSRSSQGRFSPRRHTVDDDGWSVVSGGSRSRSGSASAVTSPERRPLNI) is disordered. Over residues 1529 to 1545 (SVVSGGSRSRSGSASAV) the composition is skewed to low complexity.

The protein belongs to the glycosyltransferase 28 family.

It is found in the cytoplasm. The protein localises to the membrane. The catalysed reaction is a sterol + UDP-alpha-D-glucose = a sterol 3-beta-D-glucoside + UDP + H(+). The enzyme catalyses ergosterol + UDP-alpha-D-glucose = ergosteryl 3-beta-D-glucoside + UDP + H(+). Functionally, sterol glycosyltransferase responsible for the glycosylation of ergosterol to form ergosterol-glucoside. The chain is Sterol 3-beta-glucosyltransferase from Cryptococcus neoformans var. neoformans serotype D (strain JEC21 / ATCC MYA-565) (Filobasidiella neoformans).